The chain runs to 83 residues: Large ribosomal subunit protein eL43 (83 aa).

Residues C38, C41, C56, and C59 each coordinate Zn(2+). The C4-type zinc-finger motif lies at 38-59 (CPVCGRRAVKRISTGIWQCTKC).

This sequence belongs to the eukaryotic ribosomal protein eL43 family. Putative zinc-binding subfamily. Part of the 50S ribosomal subunit. Zn(2+) serves as cofactor.

Its function is as follows. Binds to the 23S rRNA. This chain is Large ribosomal subunit protein eL43, found in Pyrococcus horikoshii (strain ATCC 700860 / DSM 12428 / JCM 9974 / NBRC 100139 / OT-3).